We begin with the raw amino-acid sequence, 72 residues long: DNA gyrase inhibitor YacG (72 aa).

Cys7, Cys10, Cys26, and Cys30 together coordinate Zn(2+). A disordered region spans residues 44–72 (SIAGEEHTPSSDTARPQLSAEDLALLEQD).

It belongs to the DNA gyrase inhibitor YacG family. Interacts with GyrB. It depends on Zn(2+) as a cofactor.

In terms of biological role, inhibits all the catalytic activities of DNA gyrase by preventing its interaction with DNA. Acts by binding directly to the C-terminal domain of GyrB, which probably disrupts DNA binding by the gyrase. This chain is DNA gyrase inhibitor YacG, found in Tolumonas auensis (strain DSM 9187 / NBRC 110442 / TA 4).